The following is a 464-amino-acid chain: ATP-dependent protease ATPase subunit HslU (464 aa).

ATP-binding positions include valine 18, 60-65 (GVGKTE), aspartate 277, glutamate 342, and arginine 414.

Belongs to the ClpX chaperone family. HslU subfamily. As to quaternary structure, a double ring-shaped homohexamer of HslV is capped on each side by a ring-shaped HslU homohexamer. The assembly of the HslU/HslV complex is dependent on binding of ATP.

The protein localises to the cytoplasm. ATPase subunit of a proteasome-like degradation complex; this subunit has chaperone activity. The binding of ATP and its subsequent hydrolysis by HslU are essential for unfolding of protein substrates subsequently hydrolyzed by HslV. HslU recognizes the N-terminal part of its protein substrates and unfolds these before they are guided to HslV for hydrolysis. In Lactobacillus leichmannii, this protein is ATP-dependent protease ATPase subunit HslU.